Consider the following 146-residue polypeptide: D-aminoacyl-tRNA deacylase (146 aa).

Residues 137–138 (GP) carry the Gly-cisPro motif, important for rejection of L-amino acids motif.

This sequence belongs to the DTD family. In terms of assembly, homodimer.

It is found in the cytoplasm. The catalysed reaction is glycyl-tRNA(Ala) + H2O = tRNA(Ala) + glycine + H(+). It catalyses the reaction a D-aminoacyl-tRNA + H2O = a tRNA + a D-alpha-amino acid + H(+). Functionally, an aminoacyl-tRNA editing enzyme that deacylates mischarged D-aminoacyl-tRNAs. Also deacylates mischarged glycyl-tRNA(Ala), protecting cells against glycine mischarging by AlaRS. Acts via tRNA-based rather than protein-based catalysis; rejects L-amino acids rather than detecting D-amino acids in the active site. By recycling D-aminoacyl-tRNA to D-amino acids and free tRNA molecules, this enzyme counteracts the toxicity associated with the formation of D-aminoacyl-tRNA entities in vivo and helps enforce protein L-homochirality. The protein is D-aminoacyl-tRNA deacylase of Anoxybacillus flavithermus (strain DSM 21510 / WK1).